Reading from the N-terminus, the 243-residue chain is MRKIVIAGNWKMFKTQAETQEFLQGFLPHLEETPQGREVILCPPFTDLSVLSKTLHGSLIQLGAQNIHWEEFGAYTGEISGPMLTESGVRFVIVGHSERRQYFGETDATVNLRLRTAQRFGLTPILCVGETKQQRDAGETESLIALQLDKGLVDIDQNNLVIAYEPIWAIGTGETCEAVEANRIIGLIRSQLSNPNVSIQYGGSVKPNNIDEIMAQPEIDGVLVGGASLEPESFARIVNFHLV.

Residue 9-11 (NWK) participates in substrate binding. The active-site Electrophile is His96. Glu165 (proton acceptor) is an active-site residue. Substrate contacts are provided by residues Gly171, Ser204, and 225-226 (GG).

The protein belongs to the triosephosphate isomerase family. In terms of assembly, homodimer.

The protein localises to the cytoplasm. It carries out the reaction D-glyceraldehyde 3-phosphate = dihydroxyacetone phosphate. Its pathway is carbohydrate biosynthesis; gluconeogenesis. It participates in carbohydrate degradation; glycolysis; D-glyceraldehyde 3-phosphate from glycerone phosphate: step 1/1. Involved in the gluconeogenesis. Catalyzes stereospecifically the conversion of dihydroxyacetone phosphate (DHAP) to D-glyceraldehyde-3-phosphate (G3P). In Nostoc punctiforme (strain ATCC 29133 / PCC 73102), this protein is Triosephosphate isomerase.